The chain runs to 343 residues: D-alanine--D-alanine ligase (343 aa).

One can recognise an ATP-grasp domain in the interval 132–337 (KNLFSYHKIP…YPDLIDKLIE (206 aa)). An ATP-binding site is contributed by 165–220 (DRFLGWPCFVKPANMGSSIGVSKVHSPGEVKKALEKGFYYDRKLIFEEFVEGREIE). Residues Asp-291, Glu-304, and Asn-306 each contribute to the Mg(2+) site.

Belongs to the D-alanine--D-alanine ligase family. Mg(2+) is required as a cofactor. Requires Mn(2+) as cofactor.

The protein localises to the cytoplasm. It catalyses the reaction 2 D-alanine + ATP = D-alanyl-D-alanine + ADP + phosphate + H(+). Its pathway is cell wall biogenesis; peptidoglycan biosynthesis. Cell wall formation. The protein is D-alanine--D-alanine ligase of Halothermothrix orenii (strain H 168 / OCM 544 / DSM 9562).